The primary structure comprises 288 residues: Eukaryotic translation initiation factor 3 subunit G (288 aa).

The interval 1–33 (MSRVANNRDWADDEDLEDSNELPQSTTTTNKDG) is disordered. A compositionally biased stretch (acidic residues) spans 11-20 (ADDEDLEDSN). Positions 21 to 33 (ELPQSTTTTNKDG) are enriched in polar residues. The region spanning 208 to 286 (ATLRVTNVSE…LILRVEFAKK (79 aa)) is the RRM domain.

Belongs to the eIF-3 subunit G family. Component of the eukaryotic translation initiation factor 3 (eIF-3) complex.

It is found in the cytoplasm. In terms of biological role, RNA-binding component of the eukaryotic translation initiation factor 3 (eIF-3) complex, which is involved in protein synthesis of a specialized repertoire of mRNAs and, together with other initiation factors, stimulates binding of mRNA and methionyl-tRNAi to the 40S ribosome. The eIF-3 complex specifically targets and initiates translation of a subset of mRNAs involved in cell proliferation. This subunit can bind 18S rRNA. This chain is Eukaryotic translation initiation factor 3 subunit G (tif35), found in Sclerotinia sclerotiorum (strain ATCC 18683 / 1980 / Ss-1) (White mold).